Consider the following 131-residue polypeptide: D-ribose pyranase (131 aa).

Histidine 20 serves as the catalytic Proton donor. Residues aspartate 28, histidine 98, and 120–122 (YAN) contribute to the substrate site.

This sequence belongs to the RbsD / FucU family. RbsD subfamily. As to quaternary structure, homodecamer.

The protein resides in the cytoplasm. It catalyses the reaction beta-D-ribopyranose = beta-D-ribofuranose. It functions in the pathway carbohydrate metabolism; D-ribose degradation; D-ribose 5-phosphate from beta-D-ribopyranose: step 1/2. In terms of biological role, catalyzes the interconversion of beta-pyran and beta-furan forms of D-ribose. This is D-ribose pyranase from Clostridium tetani (strain Massachusetts / E88).